The sequence spans 200 residues: Small ribosomal subunit protein uS4 (200 aa).

The segment at 20 to 41 is disordered; the sequence is SGTGKELEKRPYAPGQHGPNQR. Positions 92 to 155 constitute an S4 RNA-binding domain; sequence ARLDAVVYSL…LKLDIIAESV (64 aa).

It belongs to the universal ribosomal protein uS4 family. Part of the 30S ribosomal subunit. Contacts protein S5. The interaction surface between S4 and S5 is involved in control of translational fidelity.

One of the primary rRNA binding proteins, it binds directly to 16S rRNA where it nucleates assembly of the body of the 30S subunit. In terms of biological role, with S5 and S12 plays an important role in translational accuracy. The sequence is that of Small ribosomal subunit protein uS4 from Staphylococcus saprophyticus subsp. saprophyticus (strain ATCC 15305 / DSM 20229 / NCIMB 8711 / NCTC 7292 / S-41).